Reading from the N-terminus, the 853-residue chain is DNA mismatch repair protein MutS (853 aa).

614-621 is a binding site for ATP; that stretch reads GPNMGGKS.

It belongs to the DNA mismatch repair MutS family.

Functionally, this protein is involved in the repair of mismatches in DNA. It is possible that it carries out the mismatch recognition step. This protein has a weak ATPase activity. The sequence is that of DNA mismatch repair protein MutS from Escherichia coli (strain 55989 / EAEC).